The chain runs to 98 residues: Major carboxysome shell protein CsoS1A (98 aa).

Residues 8–93 enclose the BMC domain; it reads ALGMIETRGL…VHSEVENILP (86 aa).

The protein belongs to the bacterial microcompartments protein family. CsoS1 subfamily. In terms of assembly, homohexamer with a small central pore; the concave side is mostly positive electrostatic potential, whereas the convex side is mostly negative electrostatic potential. Forms a CsoS2-CsoS1-RuBisCO complex. Interacts with the N-terminus (residues 1-136) of RuBisCO (CbbL).

It is found in the carboxysome. Functionally, the major shell protein of the carboxysome, a polyhedral inclusion where RuBisCO (ribulose bisphosphate carboxylase, ccbL-ccbS) is sequestered. Assembles into hexamers which make sheets that form the facets of the polyhedral carboxysome. The shell probably limits the diffusion of CO(2) into and out of the carboxysome. Molecular modeling shows the central pore of this protein is selectively permeable to anions such as HCO(3) rather than CO(2) or O(2). There are estimated to be 2970 CsoS1A/CsoS1C proteins per carboxysome (the proteins differ by only 1 residue). In terms of biological role, unlike beta-carboxysomes, alpha-carboxysomes (Cb) can form without cargo protein. CsoS2 is essential for Cb formation and is also capable of targeting foreign proteins to the Cb. The Cb shell assembles with the aid of CsoS2; CsoS1A, CsoS1B and CsoS1C form the majority of the shell while CsoS4A and CsoS4B form vertices. CsoS1D forms pseudohexamers that probably control metabolite flux into and out of the shell. This is Major carboxysome shell protein CsoS1A from Halothiobacillus neapolitanus (strain ATCC 23641 / c2) (Thiobacillus neapolitanus).